Reading from the N-terminus, the 1477-residue chain is FHA domain-containing protein PS1 (1477 aa).

In terms of domain architecture, FHA spans 64–115 (LVVGRHPDCDILLTHPSISRFHLEIRSISSRQKLFVTDLSSVHGTWVRDLRI). 7 disordered regions span residues 188 to 218 (ENTT…DEDT), 588 to 644 (LGKA…PKSF), 789 to 818 (PNSF…DSEF), 832 to 911 (LNQK…LIGS), 942 to 979 (ALAA…RDDV), 1004 to 1030 (IRTN…KQAL), and 1159 to 1225 (VEQE…IRSS). Basic and acidic residues predominate over residues 589 to 607 (GKADIRSHEENGESEDSRQ). Positions 832-849 (LNQKRNGETKVSSRQASP) are enriched in polar residues. Positions 870–883 (QSLCSSSQPPSESE) are enriched in low complexity. 4 stretches are compositionally biased toward polar residues: residues 885 to 897 (NPAT…SGII), 957 to 971 (LSSS…QTPE), 1007 to 1018 (NKSQGKQKQTGR), and 1198 to 1212 (SSFQ…SSTA). The span at 1213–1225 (SARNNISRGIRSS) shows a compositional bias: low complexity.

Required for normal spindle orientation at male meiosis II and normal formation of tetrad of microspores. Not involved in female meiosis. This Arabidopsis thaliana (Mouse-ear cress) protein is FHA domain-containing protein PS1.